The chain runs to 74 residues: Protein RALF-like 25 (74 aa).

Positions 1–22 are cleaved as a signal peptide; sequence MKTFMIILLVICSILIVGRVEA. 2 cysteine pairs are disulfide-bonded: Cys-35–Cys-44 and Cys-62–Cys-68.

The protein belongs to the plant rapid alkalinization factor (RALF) family.

The protein resides in the secreted. In terms of biological role, cell signaling peptide that may regulate plant stress, growth, and development. Mediates a rapid alkalinization of extracellular space by mediating a transient increase in the cytoplasmic Ca(2+) concentration leading to a calcium-dependent signaling events through a cell surface receptor and a concomitant activation of some intracellular mitogen-activated protein kinases. In Arabidopsis thaliana (Mouse-ear cress), this protein is Protein RALF-like 25 (RALFL25).